The primary structure comprises 399 residues: Phosphoglycerate kinase (399 aa).

Residues 24-26, arginine 41, 64-67, arginine 123, and arginine 160 contribute to the substrate site; these read DLN and HLGR. ATP contacts are provided by residues lysine 210, glycine 298, glutamate 329, and 355–358; that span reads GGDS.

The protein belongs to the phosphoglycerate kinase family. Monomer.

The protein localises to the cytoplasm. The enzyme catalyses (2R)-3-phosphoglycerate + ATP = (2R)-3-phospho-glyceroyl phosphate + ADP. It participates in carbohydrate degradation; glycolysis; pyruvate from D-glyceraldehyde 3-phosphate: step 2/5. The sequence is that of Phosphoglycerate kinase from Salinispora tropica (strain ATCC BAA-916 / DSM 44818 / JCM 13857 / NBRC 105044 / CNB-440).